The sequence spans 504 residues: 26S proteasome non-ATPase regulatory subunit 3 (504 aa).

The PCI domain occupies 254–433 (ARYMYYQGRI…RDGPRYMQSS (180 aa)).

Belongs to the proteasome subunit S3 family. The 26S proteasome is composed of a core protease, known as the 20S proteasome, capped at one or both ends by the 19S regulatory complex (RC). The RC is composed of at least 18 different subunits in two subcomplexes, the base and the lid, which form the portions proximal and distal to the 20S proteolytic core, respectively.

Acts as a regulatory subunit of the 26 proteasome which is involved in the ATP-dependent degradation of ubiquitinated proteins. The sequence is that of 26S proteasome non-ATPase regulatory subunit 3 (rpn-3) from Caenorhabditis elegans.